The following is a 138-amino-acid chain: ATP synthase epsilon chain (138 aa).

This sequence belongs to the ATPase epsilon chain family. In terms of assembly, F-type ATPases have 2 components, CF(1) - the catalytic core - and CF(0) - the membrane proton channel. CF(1) has five subunits: alpha(3), beta(3), gamma(1), delta(1), epsilon(1). CF(0) has three main subunits: a, b and c.

It is found in the cell membrane. Its function is as follows. Produces ATP from ADP in the presence of a proton gradient across the membrane. The chain is ATP synthase epsilon chain from Streptococcus pyogenes serotype M3 (strain ATCC BAA-595 / MGAS315).